The sequence spans 283 residues: Large ribosomal subunit protein uL2 (283 aa).

2 disordered regions span residues 34 to 53 (TEPY…TARH) and 224 to 283 (AMNP…KKKK). Over residues 232–245 (NGGGQGKSKGGGGW) the composition is skewed to gly residues. Residues 256–268 (AKGKKTRHKRKNS) show a composition bias toward basic residues.

It belongs to the universal ribosomal protein uL2 family. Part of the 50S ribosomal subunit. Forms a bridge to the 30S subunit in the 70S ribosome.

One of the primary rRNA binding proteins. Required for association of the 30S and 50S subunits to form the 70S ribosome, for tRNA binding and peptide bond formation. It has been suggested to have peptidyltransferase activity; this is somewhat controversial. Makes several contacts with the 16S rRNA in the 70S ribosome. The sequence is that of Large ribosomal subunit protein uL2 from Methylacidiphilum infernorum (isolate V4) (Methylokorus infernorum (strain V4)).